A 160-amino-acid polypeptide reads, in one-letter code: Phosphopantetheine adenylyltransferase (160 aa).

Ser8 lines the substrate pocket. Residues 8–9 and His16 each bind ATP; that span reads SF. Residues Lys40, Leu73, and Lys87 each coordinate substrate. ATP contacts are provided by residues 88-90, Glu98, and 122-128; these read GLR and YGYVSST.

It belongs to the bacterial CoaD family. Homohexamer. It depends on Mg(2+) as a cofactor.

It localises to the cytoplasm. It catalyses the reaction (R)-4'-phosphopantetheine + ATP + H(+) = 3'-dephospho-CoA + diphosphate. It functions in the pathway cofactor biosynthesis; coenzyme A biosynthesis; CoA from (R)-pantothenate: step 4/5. In terms of biological role, reversibly transfers an adenylyl group from ATP to 4'-phosphopantetheine, yielding dephospho-CoA (dPCoA) and pyrophosphate. In Corynebacterium glutamicum (strain R), this protein is Phosphopantetheine adenylyltransferase.